The sequence spans 687 residues: Threonine--tRNA ligase (687 aa).

Residues 1-67 (MAHLIEAAPN…EQDSKFTPVP (67 aa)) form the TGS domain. The interval 266 to 572 (DHRRLGAELD…LLEHYAGAFP (307 aa)) is catalytic. Positions 371, 422, and 549 each coordinate Zn(2+).

The protein belongs to the class-II aminoacyl-tRNA synthetase family. In terms of assembly, homodimer. Requires Zn(2+) as cofactor.

Its subcellular location is the cytoplasm. The catalysed reaction is tRNA(Thr) + L-threonine + ATP = L-threonyl-tRNA(Thr) + AMP + diphosphate + H(+). In terms of biological role, catalyzes the attachment of threonine to tRNA(Thr) in a two-step reaction: L-threonine is first activated by ATP to form Thr-AMP and then transferred to the acceptor end of tRNA(Thr). Also edits incorrectly charged L-seryl-tRNA(Thr). In Corynebacterium diphtheriae (strain ATCC 700971 / NCTC 13129 / Biotype gravis), this protein is Threonine--tRNA ligase.